The following is a 105-amino-acid chain: Ketoisovalerate oxidoreductase subunit VorD (105 aa).

4Fe-4S ferredoxin-type domains follow at residues 44 to 73 (FMPVIDESKCVKCYICWKFCPEPAIYIKED) and 74 to 103 (GFVAIDYDYCKGCGICANECPTKAITMVRE). Cysteine 53, cysteine 56, cysteine 59, cysteine 63, cysteine 83, cysteine 86, cysteine 89, and cysteine 93 together coordinate [4Fe-4S] cluster.

In terms of assembly, heterotetramer of one alpha, one beta, one delta and one gamma chain. [4Fe-4S] cluster serves as cofactor.

The enzyme catalyses 3-methyl-2-oxobutanoate + 2 oxidized [2Fe-2S]-[ferredoxin] + CoA = 2-methylpropanoyl-CoA + 2 reduced [2Fe-2S]-[ferredoxin] + CO2 + H(+). The sequence is that of Ketoisovalerate oxidoreductase subunit VorD (vorD) from Pyrococcus abyssi (strain GE5 / Orsay).